The following is a 367-amino-acid chain: C-X-C chemokine receptor type 3 (367 aa).

The Extracellular portion of the chain corresponds to 1 to 56; that stretch reads MYLEVSERQVLDASDIAFLLENSTSPYDYGENESDFSDSPPCPQDFSLNFDRTFLP. N-linked (GlcNAc...) asparagine glycosylation is present at Asn22. Sulfotyrosine occurs at positions 27 and 29. The N-linked (GlcNAc...) asparagine glycan is linked to Asn32. The helical transmembrane segment at 57–77 threads the bilayer; it reads VLYSLLFLLGLLGNGAVAAVL. Topologically, residues 78-89 are cytoplasmic; sequence LSQRTALSSTDT. Residues 90-110 form a helical membrane-spanning segment; sequence FLLHLAVADVLLVLTLPLWAV. At 111 to 125 the chain is on the extracellular side; that stretch reads DAAAQWVFGSGLCKV. Cys123 and Cys202 are joined by a disulfide. A helical transmembrane segment spans residues 126–146; that stretch reads AGALFNINFYAGAFLLACISF. At 147 to 168 the chain is on the cytoplasmic side; that stretch reads DRYLSIVHATQIYRRDPWVRVA. The chain crosses the membrane as a helical span at residues 169 to 189; the sequence is LTCIVVWGLCVLFALPDFIFL. Residues 190–222 are Extracellular-facing; it reads SASHDQRLNATHCQYNFPQVGRTALRVLQLVAG. N-linked (GlcNAc...) asparagine glycosylation occurs at Asn198. The helical transmembrane segment at 223–243 threads the bilayer; sequence FLMPLLVMAYCYAHILAVLLV. At 244 to 255 the chain is on the cytoplasmic side; that stretch reads SRGQRRFRAMRL. A helical transmembrane segment spans residues 256 to 276; the sequence is VVVVVVAFAVCWTPYHLVVLV. The Extracellular segment spans residues 277-300; sequence DILMDVGVLARNCGRESHVDVAKS. A helical membrane pass occupies residues 301 to 321; the sequence is VTSGMGYMHCCLNPLLYAFVG. Residues 322–367 are Cytoplasmic-facing; sequence VKFKEQMWMLLMRLGRSDQRGPQRQPSSSRRESSWSETTEASYLGL. Residues 339-367 form a disordered region; the sequence is DQRGPQRQPSSSRRESSWSETTEASYLGL.

The protein belongs to the G-protein coupled receptor 1 family. In terms of assembly, homomer. Forms heteromers with ACKR4. Interacts with PF4/CXCL4. In terms of processing, sulfation on Tyr-27 and Tyr-29 is essential for CXCL10 binding. Post-translationally, N-glycosylated.

The protein resides in the cell membrane. In terms of biological role, receptor for the C-X-C chemokine CXCL9, CXCL10 and CXCL11 and mediates the proliferation, survival and angiogenic activity of mesangial cells through a heterotrimeric G-protein signaling pathway. Probably promotes cell chemotaxis response. Binds to CCL21. Upon activation by PF4, induces activated T-lymphocytes migration mediated via downstream Ras/extracellular signal-regulated kinase (ERK) signaling. In Rattus norvegicus (Rat), this protein is C-X-C chemokine receptor type 3 (Cxcr3).